The sequence spans 68 residues: Movement protein TGBp3 (68 aa).

The Lumenal portion of the chain corresponds to 1-6 (MFSGKE). Residues 7 to 26 (ITLFALSTLIALIVLNYMSA) traverse the membrane as a helical segment. The Cytoplasmic portion of the chain corresponds to 27-68 (TPNPVCLIELTGHSAVLRGNNCESLTSGVIEALSAHLHGLRN).

Belongs to the Tymovirales TGBp3 protein family.

It localises to the host endoplasmic reticulum membrane. Plays a role in viral cell-to-cell propagation, by facilitating genome transport to neighboring plant cells through plasmosdesmata. May induce the formation of granular vesicles derived from the Endoplasmic reticulum, which align on actin filaments. This is Movement protein TGBp3 from Papaya mosaic potexvirus (PMV).